The chain runs to 494 residues: Glycerol kinase (494 aa).

Residue threonine 13 participates in ADP binding. ATP-binding residues include threonine 13, threonine 14, and serine 15. Residue threonine 13 coordinates sn-glycerol 3-phosphate. Arginine 17 is an ADP binding site. Residues arginine 83, glutamate 84, tyrosine 135, and aspartate 244 each coordinate sn-glycerol 3-phosphate. Glycerol-binding residues include arginine 83, glutamate 84, tyrosine 135, aspartate 244, and glutamine 245. ADP contacts are provided by threonine 266 and glycine 309. ATP-binding residues include threonine 266, glycine 309, glutamine 313, and glycine 410. ADP contacts are provided by glycine 410 and asparagine 414.

The protein belongs to the FGGY kinase family.

It carries out the reaction glycerol + ATP = sn-glycerol 3-phosphate + ADP + H(+). Its pathway is polyol metabolism; glycerol degradation via glycerol kinase pathway; sn-glycerol 3-phosphate from glycerol: step 1/1. Its activity is regulated as follows. Inhibited by fructose 1,6-bisphosphate (FBP). Key enzyme in the regulation of glycerol uptake and metabolism. Catalyzes the phosphorylation of glycerol to yield sn-glycerol 3-phosphate. The sequence is that of Glycerol kinase from Shewanella baltica (strain OS195).